The primary structure comprises 278 residues: UPF0750 membrane protein YxkD (278 aa).

Helical transmembrane passes span 8-28 (VLML…FAIP), 46-66 (LFQW…LLIG), 77-97 (YTII…GWSI), 101-121 (ELII…GMII), and 145-165 (ISYA…FIIG).

It belongs to the UPF0750 family.

The protein resides in the cell membrane. This chain is UPF0750 membrane protein YxkD (yxkD), found in Bacillus subtilis (strain 168).